The following is a 396-amino-acid chain: Ribosomal RNA large subunit methyltransferase I (396 aa).

The PUA domain maps to 2-81 (SVRLVLAKGR…ESIDIAFFSR (80 aa)).

It belongs to the methyltransferase superfamily. RlmI family.

The protein localises to the cytoplasm. The catalysed reaction is cytidine(1962) in 23S rRNA + S-adenosyl-L-methionine = 5-methylcytidine(1962) in 23S rRNA + S-adenosyl-L-homocysteine + H(+). Its function is as follows. Specifically methylates the cytosine at position 1962 (m5C1962) of 23S rRNA. This is Ribosomal RNA large subunit methyltransferase I from Shigella boydii serotype 4 (strain Sb227).